Reading from the N-terminus, the 472-residue chain is ATP synthase subunit beta (472 aa).

155–162 (GGAGVGKT) serves as a coordination point for ATP.

Belongs to the ATPase alpha/beta chains family. As to quaternary structure, F-type ATPases have 2 components, CF(1) - the catalytic core - and CF(0) - the membrane proton channel. CF(1) has five subunits: alpha(3), beta(3), gamma(1), delta(1), epsilon(1). CF(0) has three main subunits: a(1), b(2) and c(9-12). The alpha and beta chains form an alternating ring which encloses part of the gamma chain. CF(1) is attached to CF(0) by a central stalk formed by the gamma and epsilon chains, while a peripheral stalk is formed by the delta and b chains.

It is found in the cell membrane. The catalysed reaction is ATP + H2O + 4 H(+)(in) = ADP + phosphate + 5 H(+)(out). Functionally, produces ATP from ADP in the presence of a proton gradient across the membrane. The catalytic sites are hosted primarily by the beta subunits. The protein is ATP synthase subunit beta of Fervidobacterium islandicum.